The primary structure comprises 122 residues: Large ribosomal subunit protein uL14 (122 aa).

The protein belongs to the universal ribosomal protein uL14 family. In terms of assembly, part of the 50S ribosomal subunit. Forms a cluster with proteins L3 and L19. In the 70S ribosome, L14 and L19 interact and together make contacts with the 16S rRNA in bridges B5 and B8.

Functionally, binds to 23S rRNA. Forms part of two intersubunit bridges in the 70S ribosome. This Cupriavidus taiwanensis (strain DSM 17343 / BCRC 17206 / CCUG 44338 / CIP 107171 / LMG 19424 / R1) (Ralstonia taiwanensis (strain LMG 19424)) protein is Large ribosomal subunit protein uL14.